The sequence spans 150 residues: Large ribosomal subunit protein bL9 (150 aa).

This sequence belongs to the bacterial ribosomal protein bL9 family.

In terms of biological role, binds to the 23S rRNA. This Corynebacterium kroppenstedtii (strain DSM 44385 / JCM 11950 / CIP 105744 / CCUG 35717) protein is Large ribosomal subunit protein bL9.